We begin with the raw amino-acid sequence, 143 residues long: Transcriptional regulator MraZ (143 aa).

SpoVT-AbrB domains lie at 5–47 and 76–119; these read EYQH…PKEE and AGEC…SRER.

Belongs to the MraZ family. As to quaternary structure, forms oligomers.

The protein localises to the cytoplasm. Its subcellular location is the nucleoid. This is Transcriptional regulator MraZ from Heliobacterium modesticaldum (strain ATCC 51547 / Ice1).